Here is a 228-residue protein sequence, read N- to C-terminus: Probable septum site-determining protein MinC (228 aa).

Belongs to the MinC family. As to quaternary structure, interacts with MinD and FtsZ.

Its function is as follows. Cell division inhibitor that blocks the formation of polar Z ring septums. Rapidly oscillates between the poles of the cell to destabilize FtsZ filaments that have formed before they mature into polar Z rings. Prevents FtsZ polymerization. The polypeptide is Probable septum site-determining protein MinC (Yersinia pseudotuberculosis serotype O:1b (strain IP 31758)).